Consider the following 391-residue polypeptide: Cytochrome b (391 aa).

4 helical membrane passes run 33–53 (FGSL…FLAM), 77–98 (WLIR…YLHI), 113–133 (WSAG…GYVL), and 178–198 (FFAF…VHLL). 2 residues coordinate heme b: His83 and His97. 2 residues coordinate heme b: His182 and His196. A ubiquinone is bound at residue His201. The next 4 membrane-spanning stretches (helical) occupy residues 226–246 (YKDL…VLFI), 288–308 (LGGV…PILH), 320–340 (LAQI…WIGG), and 347–367 (FIII…VFFP).

It belongs to the cytochrome b family. The cytochrome bc1 complex contains 3 respiratory subunits (MT-CYB, CYC1 and UQCRFS1), 2 core proteins (UQCRC1 and UQCRC2) and probably 6 low-molecular weight proteins. Heme b serves as cofactor.

It localises to the mitochondrion inner membrane. Functionally, component of the ubiquinol-cytochrome c reductase complex (complex III or cytochrome b-c1 complex) that is part of the mitochondrial respiratory chain. The b-c1 complex mediates electron transfer from ubiquinol to cytochrome c. Contributes to the generation of a proton gradient across the mitochondrial membrane that is then used for ATP synthesis. The protein is Cytochrome b (mt-cyb) of Kryptolebias marmoratus (Mangrove killifish).